Consider the following 1594-residue polypeptide: Protein SHORTAGE IN CHIASMATA 1 (1594 aa).

Disordered regions lie at residues 1148–1180 (DSRS…SKKK), 1239–1283 (APFK…QPDF), 1396–1426 (AADI…YADN), 1491–1523 (RSRA…NTKR), and 1536–1594 (GGNK…LVWK). Residues 1151 to 1165 (SVMTDSSSSVSSGPD) are compositionally biased toward low complexity. 2 stretches are compositionally biased toward basic and acidic residues: residues 1254–1265 (PSKDPERFDKKS) and 1402–1414 (SSER…DSKY). Over residues 1577–1594 (QSLSYTANGTGQTKLVWK) the composition is skewed to polar residues.

This sequence belongs to the XPF family. In terms of assembly, interacts with PTD. Highest levels in young buds, where male meiosis occurs. Also present at low levels in plantlets, leaves, flowers, and roots.

Its subcellular location is the nucleus. Its function is as follows. Essential for the formation of class I meiotic crossovers. This Arabidopsis thaliana (Mouse-ear cress) protein is Protein SHORTAGE IN CHIASMATA 1.